The sequence spans 216 residues: ATP phosphoribosyltransferase (216 aa).

This sequence belongs to the ATP phosphoribosyltransferase family. Short subfamily. Heteromultimer composed of HisG and HisZ subunits.

Its subcellular location is the cytoplasm. The enzyme catalyses 1-(5-phospho-beta-D-ribosyl)-ATP + diphosphate = 5-phospho-alpha-D-ribose 1-diphosphate + ATP. It functions in the pathway amino-acid biosynthesis; L-histidine biosynthesis; L-histidine from 5-phospho-alpha-D-ribose 1-diphosphate: step 1/9. Catalyzes the condensation of ATP and 5-phosphoribose 1-diphosphate to form N'-(5'-phosphoribosyl)-ATP (PR-ATP). Has a crucial role in the pathway because the rate of histidine biosynthesis seems to be controlled primarily by regulation of HisG enzymatic activity. The sequence is that of ATP phosphoribosyltransferase from Acidovorax ebreus (strain TPSY) (Diaphorobacter sp. (strain TPSY)).